We begin with the raw amino-acid sequence, 86 residues long: Defensin-like SRCA-homolog protein (86 aa).

An N-terminal signal peptide occupies residues 1 to 26; the sequence is MRCVVLFMVSCLLIVLLINHFEEVEA. 4 cysteine pairs are disulfide-bonded: cysteine 32–cysteine 84, cysteine 42–cysteine 70, cysteine 52–cysteine 79, and cysteine 68–cysteine 81.

It belongs to the DEFL family.

The protein resides in the secreted. In terms of biological role, involved in male-mediated self-incompatibility. This is Defensin-like SRCA-homolog protein (SCR37) from Arabidopsis lyrata (Lyre-leaved rock-cress).